The sequence spans 258 residues: uncharacterized protein (258 aa).

The NADP(+) site is built by I17, D53, N80, R113, Y145, K149, I178, and S180. Y145 functions as the Proton donor in the catalytic mechanism. The active-site Lowers pKa of active site Tyr is K149.

This sequence belongs to the short-chain dehydrogenases/reductases (SDR) family.

It localises to the cytoplasm. The protein resides in the nucleus. This is an uncharacterized protein from Schizosaccharomyces pombe (strain 972 / ATCC 24843) (Fission yeast).